Reading from the N-terminus, the 375-residue chain is Succinyl-diaminopimelate desuccinylase (375 aa).

Histidine 66 is a binding site for Zn(2+). The active site involves aspartate 68. A Zn(2+)-binding site is contributed by aspartate 99. Glutamate 133 (proton acceptor) is an active-site residue. Zn(2+) is bound by residues glutamate 134, glutamate 162, and histidine 348.

It belongs to the peptidase M20A family. DapE subfamily. In terms of assembly, homodimer. Zn(2+) is required as a cofactor. Co(2+) serves as cofactor.

The enzyme catalyses N-succinyl-(2S,6S)-2,6-diaminopimelate + H2O = (2S,6S)-2,6-diaminopimelate + succinate. It participates in amino-acid biosynthesis; L-lysine biosynthesis via DAP pathway; LL-2,6-diaminopimelate from (S)-tetrahydrodipicolinate (succinylase route): step 3/3. In terms of biological role, catalyzes the hydrolysis of N-succinyl-L,L-diaminopimelic acid (SDAP), forming succinate and LL-2,6-diaminopimelate (DAP), an intermediate involved in the bacterial biosynthesis of lysine and meso-diaminopimelic acid, an essential component of bacterial cell walls. The polypeptide is Succinyl-diaminopimelate desuccinylase (Shigella dysenteriae serotype 1 (strain Sd197)).